We begin with the raw amino-acid sequence, 40 residues long: Thioredoxin (40 aa).

A disulfide bridge links Cys29 with Cys32.

The protein belongs to the thioredoxin family.

Its function is as follows. Participates in various redox reactions through the reversible oxidation of its active center dithiol to a disulfide and catalyzes dithiol-disulfide exchange reactions. In Clostridium sporogenes, this protein is Thioredoxin (trxA).